The primary structure comprises 148 residues: MLRLFSSRFYCKIATKSNEKATKLDFKQLTHPTKVPQTPVDSKFPDTSASEIQIDTKTIQLLERLSLVDLDSERALATLKSSIQFADKIAHINTEHVRPLYTVLEHQQLQLRNDQVTEGDCRAEVLRNAKVTDEDYFVSPPGNIPLEQ.

It belongs to the GatC family. As to quaternary structure, subunit of the heterotrimeric GatCAB amidotransferase (AdT) complex, composed of A, B and C subunits.

The protein resides in the mitochondrion. The catalysed reaction is L-glutamyl-tRNA(Gln) + L-glutamine + ATP + H2O = L-glutaminyl-tRNA(Gln) + L-glutamate + ADP + phosphate + H(+). In terms of biological role, allows the formation of correctly charged Gln-tRNA(Gln) through the transamidation of misacylated Glu-tRNA(Gln) in the mitochondria. The reaction takes place in the presence of glutamine and ATP through an activated gamma-phospho-Glu-tRNA(Gln). The polypeptide is Glutamyl-tRNA(Gln) amidotransferase subunit C, mitochondrial (Drosophila melanogaster (Fruit fly)).